The chain runs to 126 residues: Tachykinin-3 (126 aa).

The signal sequence occupies residues 1–20; sequence MRSTLLFAVILALSSARSLG. Residues 21-83 constitute a propeptide that is removed on maturation; that stretch reads AVCEESQEQV…VGPKESPLPQ (63 aa). Methionine amide is present on Met95. Positions 99 to 126 are excised as a propeptide; the sequence is NLQPDTPVDINQENIPSFGTFKYPPSVE. A disordered region spans residues 102–126; sequence PDTPVDINQENIPSFGTFKYPPSVE.

This sequence belongs to the tachykinin family.

It localises to the secreted. Tachykinins are active peptides which excite neurons, evoke behavioral responses, are potent vasodilators and secretagogues, and contract (directly or indirectly) many smooth muscles. Is a critical central regulator of gonadal function. The protein is Tachykinin-3 (TAC3) of Bos taurus (Bovine).